Reading from the N-terminus, the 976-residue chain is Mast/stem cell growth factor receptor Kit (976 aa).

The first 25 residues, 1 to 25 (MRGARGAWDFLCVLLLLLRVQTGSS), serve as a signal peptide directing secretion. Residues 26-524 (QPSVSPGEPS…QIHPHTLFTP (499 aa)) are Extracellular-facing. 5 consecutive Ig-like C2-type domains span residues 27–112 (PSVS…VFVR), 121–205 (DRSL…LKVR), 212–308 (PVVS…LEVV), 317–410 (PMIN…VYVN), and 413–507 (PEIL…FNFA). Cysteine 58 and cysteine 97 form a disulfide bridge. 2 N-linked (GlcNAc...) asparagine glycosylation sites follow: asparagine 130 and asparagine 145. 3 cysteine pairs are disulfide-bonded: cysteine 136/cysteine 186, cysteine 151/cysteine 183, and cysteine 233/cysteine 290. Asparagine 283, asparagine 293, asparagine 300, asparagine 320, asparagine 352, asparagine 367, asparagine 463, and asparagine 486 each carry an N-linked (GlcNAc...) asparagine glycan. Cysteine 428 and cysteine 491 are disulfide-bonded. Residues 525 to 545 (LLIGFVIVAGMMCIIVMILTY) traverse the membrane as a helical segment. Residues 546–976 (KYLQKPMYEV…SQPLLVHDDV (431 aa)) are Cytoplasmic-facing. Tyrosine 547, tyrosine 553, tyrosine 568, and tyrosine 570 each carry phosphotyrosine; by autocatalysis. Tyrosine 568 is a binding site for Mg(2+). An important for interaction with phosphotyrosine-binding proteins region spans residues 568–570 (YVY). In terms of domain architecture, Protein kinase spans 589–937 (LSFGKTLGAG…ISESTNHIYS (349 aa)). ATP-binding positions include 596 to 603 (GAGAFGKV), lysine 623, and 671 to 677 (EYCCYGD). Tyrosine 703, tyrosine 721, and tyrosine 730 each carry phosphotyrosine; by autocatalysis. Residues serine 741 and serine 746 each carry the phosphoserine; by PKC/PRKCA modification. Aspartate 792 functions as the Proton acceptor in the catalytic mechanism. Arginine 796 contributes to the ATP binding site. Asparagine 797 and aspartate 810 together coordinate Mg(2+). Phosphoserine is present on serine 821. Tyrosine 823 bears the Phosphotyrosine; by autocatalysis mark. Serine 891 is modified (phosphoserine). Phosphotyrosine; by autocatalysis occurs at positions 900 and 936. Serine 959 bears the Phosphoserine mark.

It belongs to the protein kinase superfamily. Tyr protein kinase family. CSF-1/PDGF receptor subfamily. As to quaternary structure, monomer in the absence of bound KITLG/SCF. Homodimer in the presence of bound KITLG/SCF, forming a heterotetramer with two KITLG/SCF molecules. Interacts (via phosphorylated tyrosine residues) with the adapter proteins GRB2 and GRB7 (via SH2 domain), and SH2B2/APS. Interacts (via C-terminus) with MPDZ (via the tenth PDZ domain). Interacts (via phosphorylated tyrosine residues) with PIK3R1 and PIK3 catalytic subunit. Interacts (via phosphorylated tyrosine) with CRK (isoform Crk-II), FYN, SHC1 and MATK/CHK (via SH2 domain). Interacts with LYN and FES/FPS. Interacts (via phosphorylated tyrosine residues) with the protein phosphatases PTPN6/SHP-1 (via SH2 domain), PTPN11/SHP-2 (via SH2 domain) and PTPRU. Interacts with PLCG1. Interacts with DOK1 and TEC. Interacts (KITLG/SCF-bound) with IL1RL1. Interacts with IL1RAP (independent of stimulation with KITLG/SCF). A mast cell-specific KITLG/SCF-induced interleukin-33 signaling complex contains IL1RL1, IL1RAP, KIT and MYD88. In terms of processing, ubiquitinated by SOCS6. KIT is rapidly ubiquitinated after autophosphorylation induced by KITLG/SCF binding, leading to internalization and degradation. Autophosphorylated on tyrosine residues. KITLG/SCF binding enhances autophosphorylation. Isoform 1 shows low levels of tyrosine phosphorylation in the absence of added KITLG/SCF (in vitro). Kinase activity is down-regulated by phosphorylation on serine residues by protein kinase C family members. Phosphorylation at Tyr-568 is required for interaction with PTPN11/SHP-2, CRK (isoform Crk-II) and members of the SRC tyrosine-protein kinase family. Phosphorylation at Tyr-570 is required for interaction with PTPN6/SHP-1. Phosphorylation at Tyr-703, Tyr-823 and Tyr-936 is important for interaction with GRB2. Phosphorylation at Tyr-721 is important for interaction with PIK3R1. Phosphorylation at Tyr-823 and Tyr-936 is important for interaction with GRB7. As to expression, in testis, detected in spermatogonia in the basal layer and in interstitial Leydig cells but not in Sertoli cells or spermatocytes inside the seminiferous tubules (at protein level). Expression is maintained in ejaculated spermatozoa (at protein level).

The protein resides in the cell membrane. Its subcellular location is the cytoplasm. The catalysed reaction is L-tyrosyl-[protein] + ATP = O-phospho-L-tyrosyl-[protein] + ADP + H(+). Its activity is regulated as follows. Present in an inactive conformation in the absence of bound ligand. KITLG/SCF binding leads to dimerization and activation by autophosphorylation on tyrosine residues. Activity is down-regulated by PRKCA-mediated phosphorylation on serine residues. Inhibited by imatinib/STI-571 (Gleevec) and sunitinib; these compounds maintain the kinase in an inactive conformation. Its function is as follows. Tyrosine-protein kinase that acts as a cell-surface receptor for the cytokine KITLG/SCF and plays an essential role in the regulation of cell survival and proliferation, hematopoiesis, stem cell maintenance, gametogenesis, mast cell development, migration and function, and in melanogenesis. In response to KITLG/SCF binding, KIT can activate several signaling pathways. Phosphorylates PIK3R1, PLCG1, SH2B2/APS and CBL. Activates the AKT1 signaling pathway by phosphorylation of PIK3R1, the regulatory subunit of phosphatidylinositol 3-kinase. Activated KIT also transmits signals via GRB2 and activation of RAS, RAF1 and the MAP kinases MAPK1/ERK2 and/or MAPK3/ERK1. Promotes activation of STAT family members STAT1, STAT3, STAT5A and STAT5B. Activation of PLCG1 leads to the production of the cellular signaling molecules diacylglycerol and inositol 1,4,5-trisphosphate. KIT signaling is modulated by protein phosphatases, and by rapid internalization and degradation of the receptor. Activated KIT promotes phosphorylation of the protein phosphatases PTPN6/SHP-1 and PTPRU, and of the transcription factors STAT1, STAT3, STAT5A and STAT5B. Promotes phosphorylation of PIK3R1, CBL, CRK (isoform Crk-II), LYN, MAPK1/ERK2 and/or MAPK3/ERK1, PLCG1, SRC and SHC1. The sequence is that of Mast/stem cell growth factor receptor Kit (KIT) from Homo sapiens (Human).